Consider the following 877-residue polypeptide: Phosphoenolpyruvate carboxylase (877 aa).

Active-site residues include His138 and Lys544.

It belongs to the PEPCase type 1 family. Mg(2+) serves as cofactor.

The enzyme catalyses oxaloacetate + phosphate = phosphoenolpyruvate + hydrogencarbonate. Its function is as follows. Forms oxaloacetate, a four-carbon dicarboxylic acid source for the tricarboxylic acid cycle. This Vibrio parahaemolyticus serotype O3:K6 (strain RIMD 2210633) protein is Phosphoenolpyruvate carboxylase.